The primary structure comprises 289 residues: Oxaloacetate decarboxylase (289 aa).

Residue S50 participates in substrate binding. D88 contributes to the Mg(2+) binding site. Substrate contacts are provided by R159 and H235.

It belongs to the isocitrate lyase/PEP mutase superfamily. Oxaloacetate decarboxylase family. In terms of assembly, homotetramer; dimer of dimers. It depends on Mg(2+) as a cofactor.

It carries out the reaction oxaloacetate + H(+) = pyruvate + CO2. In terms of biological role, catalyzes the decarboxylation of oxaloacetate into pyruvate. Seems to play a role in maintaining cellular concentrations of bicarbonate and pyruvate. This Pseudomonas putida (strain ATCC 47054 / DSM 6125 / CFBP 8728 / NCIMB 11950 / KT2440) protein is Oxaloacetate decarboxylase.